The chain runs to 348 residues: uncharacterized protein (348 aa).

This is an uncharacterized protein from Sulfolobus islandicus filamentous virus (isolate Iceland/Hveragerdi) (SIFV).